A 269-amino-acid polypeptide reads, in one-letter code: Mitochondrial S-adenosylmethionine carrier protein (269 aa).

Solcar repeat units follow at residues 4–77 (REFC…AKQL), 85–167 (LSPI…LKDL), and 176–264 (VDSW…VRTL). 6 helical membrane passes run 5-25 (EFCA…LILF), 49-69 (IYAG…AFFV), 84-104 (YLSP…ACLI), 141-161 (RGYK…FPLW), 181-201 (SAVC…PLDV), and 237-257 (FAGV…FLGA).

The protein belongs to the mitochondrial carrier (TC 2.A.29) family.

It localises to the mitochondrion inner membrane. It catalyses the reaction S-adenosyl-L-homocysteine(out) + S-adenosyl-L-methionine(in) = S-adenosyl-L-homocysteine(in) + S-adenosyl-L-methionine(out). Functionally, mitochondrial S-adenosyl-L-methionine/S-adenosyl-L-homocysteine antiporter. Mediates the exchange of cytosolic S-adenosyl-L-methionine, the predominant methyl-group donor for macromolecule methylation processes, for mitochondrial S-adenosylhomocysteine(SAH), a by-product of methylation reactions. The sequence is that of Mitochondrial S-adenosylmethionine carrier protein (slc25a26) from Xenopus tropicalis (Western clawed frog).